A 368-amino-acid chain; its full sequence is 3-isopropylmalate dehydrogenase (368 aa).

NAD(+) is bound at residue 79 to 91 (GPEWGTSSTVRPE). Residues Arg-98, Arg-108, Arg-137, and Asp-226 each coordinate substrate. Residues Asp-226, Asp-251, and Asp-255 each contribute to the Mg(2+) site. 291-303 (GSAPDISGKGIVN) lines the NAD(+) pocket.

It belongs to the isocitrate and isopropylmalate dehydrogenases family. As to quaternary structure, homodimer. Mg(2+) is required as a cofactor. It depends on Mn(2+) as a cofactor.

The protein localises to the cytoplasm. The enzyme catalyses (2R,3S)-3-isopropylmalate + NAD(+) = 4-methyl-2-oxopentanoate + CO2 + NADH. The protein operates within amino-acid biosynthesis; L-leucine biosynthesis; L-leucine from 3-methyl-2-oxobutanoate: step 3/4. In terms of biological role, catalyzes the oxidation of 3-carboxy-2-hydroxy-4-methylpentanoate (3-isopropylmalate) to 3-carboxy-4-methyl-2-oxopentanoate. The product decarboxylates to 4-methyl-2 oxopentanoate. This Neurospora crassa (strain ATCC 24698 / 74-OR23-1A / CBS 708.71 / DSM 1257 / FGSC 987) protein is 3-isopropylmalate dehydrogenase (leu-1).